Consider the following 102-residue polypeptide: Vesicle-associated membrane protein 5 (102 aa).

Over 1 to 72 the chain is Cytoplasmic; sequence MAGKELERCQ…RWENIRCRVY (72 aa). Residues 5 to 65 enclose the v-SNARE coiled-coil homology domain; that stretch reads ELERCQRQAD…KTLAQQKRWE (61 aa). Phosphoserine is present on residues Ser41, Ser48, and Ser49. A helical; Anchor for type IV membrane protein transmembrane segment spans residues 73–93; that stretch reads LGLAVAGGLLLILVVLLVIFL. Over 94–102 the chain is Vesicular; sequence PSGEDSSKP.

This sequence belongs to the synaptobrevin family.

Its subcellular location is the cell membrane. It localises to the endomembrane system. It is found in the golgi apparatus. The protein localises to the trans-Golgi network membrane. In terms of biological role, may participate in trafficking events that are associated with myogenesis, such as myoblast fusion and/or GLUT4 trafficking. In Rattus norvegicus (Rat), this protein is Vesicle-associated membrane protein 5 (Vamp5).